The chain runs to 382 residues: Non-structural maintenance of chromosomes element 4 homolog A (382 aa).

Basic and acidic residues predominate over residues 1–21 (MSGDSSGRRPEGRGRGRDPHR). The disordered stretch occupies residues 1 to 80 (MSGDSSGRRP…ASLEEETDPS (80 aa)). Residues 31-41 (RSPLSPGSRRG) are compositionally biased toward low complexity. The segment covering 42–55 (AAPERREAPERPGL) has biased composition (basic and acidic residues). The span at 56–78 (EDTEPSDSGDEMIDPASLEEETD) shows a compositional bias: acidic residues. Residue Thr342 is modified to Phosphothreonine. Ser374 carries the phosphoserine modification.

It belongs to the NSE4 family. As to quaternary structure, component of the SMC5-SMC6 complex which consists at least of SMC5, SMC6, NSMCE2, NSMCE1, NSMCE4A or EID3 and NSMCE3. NSMCE1, NSMCE4A or EID3 and NSMCE3 probably form a subcomplex that bridges the head domains of the SMC5:SMC6 heterodimer. Interacts with NSMCE3.

It is found in the nucleus. The protein localises to the chromosome. The protein resides in the telomere. Its function is as follows. Component of the SMC5-SMC6 complex, a complex involved in repair of DNA double-strand breaks by homologous recombination. The complex may promote sister chromatid homologous recombination by recruiting the SMC1-SMC3 cohesin complex to double-strand breaks. The complex is required for telomere maintenance via recombination and mediates sumoylation of shelterin complex (telosome) components. The chain is Non-structural maintenance of chromosomes element 4 homolog A (NSMCE4A) from Bos taurus (Bovine).